The sequence spans 488 residues: 1-hydroxycarotenoid 3,4-desaturase (488 aa).

FAD-binding positions include glutamate 31, lysine 39, serine 55 to leucine 56, valine 247, asparagine 275, leucine 431, glycine 461, and glycine 468 to isoleucine 469.

It belongs to the carotenoid/retinoid oxidoreductase family. In terms of assembly, monomer.

The catalysed reaction is rhodopin + A = (3E)-3,4-didehydrorhodopin + AH2. The enzyme catalyses 1'-hydroxy-gamma-carotene + A = 1'-hydroxytorulene + AH2. It carries out the reaction 1-hydroxy-all-trans-1,2-dihydro-neurosporene + A = demethylspheroidene + AH2. It catalyses the reaction 1,1'-dihydroxy-1,1',2,2'-tetrahydroneurosporene + A = 1'-hydroxy-demethylspheroidene + AH2. The catalysed reaction is 1,1'-dihydroxy-1,1',2,2'-tetrahydrolycopene + A = 1,1'-dihydroxy-3,4-didehydro-1,2-dihydrolycopene + AH2. It participates in carotenoid biosynthesis. Its function is as follows. Catalyzes the introduction of a C-3,4 double bond into 1'-hydroxy-gamma-carotene and rhodopin (1-hydroxylycopene) to yield 1'-hydroxytorulene and (3E)-3,4-didehydrorhodopin, respectively. Can also 1-hydroxy-all-trans-1,2-dihydro-neurosporene, 1,1'-dihydroxy-1,1',2,2'-tetrahydroneurosporene and 1,1'-dihydroxy-1,1',2,2'-tetrahydrolycopene. Probably involved in the synthesis of myxol, a gamma-carotene derivative. May use FAD as a proton acceptor. The chain is 1-hydroxycarotenoid 3,4-desaturase from Flavobacterium sp. (strain P99-3).